The following is a 241-amino-acid chain: Ribonuclease PH (241 aa).

Phosphate is bound by residues Arg-86 and 124–126; that span reads GTR.

This sequence belongs to the RNase PH family. In terms of assembly, homohexameric ring arranged as a trimer of dimers.

It catalyses the reaction tRNA(n+1) + phosphate = tRNA(n) + a ribonucleoside 5'-diphosphate. In terms of biological role, phosphorolytic 3'-5' exoribonuclease that plays an important role in tRNA 3'-end maturation. Removes nucleotide residues following the 3'-CCA terminus of tRNAs; can also add nucleotides to the ends of RNA molecules by using nucleoside diphosphates as substrates, but this may not be physiologically important. Probably plays a role in initiation of 16S rRNA degradation (leading to ribosome degradation) during starvation. The chain is Ribonuclease PH from Hamiltonella defensa subsp. Acyrthosiphon pisum (strain 5AT).